Consider the following 683-residue polypeptide: Rhophilin-2-A (683 aa).

Residues 25–99 (KSIAQTGRSK…LERLNISVEV (75 aa)) enclose the REM-1 domain. The BRO1 domain maps to 110-501 (PLIPLGLKET…TDIFQRLGPL (392 aa)). The PDZ domain maps to 515 to 592 (KICITKEDGD…QSIEIQVISI (78 aa)).

It belongs to the RHPN family. In terms of assembly, interacts with RhoA.

It is found in the cytoplasm. Its subcellular location is the perinuclear region. Its function is as follows. Binds specifically to GTP-Rho. The sequence is that of Rhophilin-2-A (rhpn2-a) from Xenopus laevis (African clawed frog).